Reading from the N-terminus, the 344-residue chain is Methionine import ATP-binding protein MetN (344 aa).

The ABC transporter domain maps to 2–241 (IELQGLSQRF…PQHDVTRAMI (240 aa)). 38–45 (GRSGAGKS) serves as a coordination point for ATP.

It belongs to the ABC transporter superfamily. Methionine importer (TC 3.A.1.24) family. As to quaternary structure, the complex is composed of two ATP-binding proteins (MetN), two transmembrane proteins (MetI) and a solute-binding protein (MetQ).

Its subcellular location is the cell inner membrane. The catalysed reaction is L-methionine(out) + ATP + H2O = L-methionine(in) + ADP + phosphate + H(+). It catalyses the reaction D-methionine(out) + ATP + H2O = D-methionine(in) + ADP + phosphate + H(+). Part of the ABC transporter complex MetNIQ involved in methionine import. Responsible for energy coupling to the transport system. This is Methionine import ATP-binding protein MetN from Cupriavidus necator (strain ATCC 17699 / DSM 428 / KCTC 22496 / NCIMB 10442 / H16 / Stanier 337) (Ralstonia eutropha).